Consider the following 88-residue polypeptide: Small ribosomal subunit protein uS17 (88 aa).

This sequence belongs to the universal ribosomal protein uS17 family. In terms of assembly, part of the 30S ribosomal subunit.

One of the primary rRNA binding proteins, it binds specifically to the 5'-end of 16S ribosomal RNA. This Azotobacter vinelandii (strain DJ / ATCC BAA-1303) protein is Small ribosomal subunit protein uS17.